Here is a 109-residue protein sequence, read N- to C-terminus: Beta-keratin-related protein (109 aa).

Ser2 carries the post-translational modification N-acetylserine.

This sequence belongs to the avian keratin family.

The polypeptide is Beta-keratin-related protein (BKJ) (Coturnix japonica (Japanese quail)).